A 210-amino-acid chain; its full sequence is Imidazole glycerol phosphate synthase subunit HisH (210 aa).

In terms of domain architecture, Glutamine amidotransferase type-1 spans 1 to 205 (MIAVINYGAG…VELALSRGSG (205 aa)). The active-site Nucleophile is Cys79. Residues His180 and Glu182 contribute to the active site.

As to quaternary structure, heterodimer of HisH and HisF.

It localises to the cytoplasm. It catalyses the reaction 5-[(5-phospho-1-deoxy-D-ribulos-1-ylimino)methylamino]-1-(5-phospho-beta-D-ribosyl)imidazole-4-carboxamide + L-glutamine = D-erythro-1-(imidazol-4-yl)glycerol 3-phosphate + 5-amino-1-(5-phospho-beta-D-ribosyl)imidazole-4-carboxamide + L-glutamate + H(+). The catalysed reaction is L-glutamine + H2O = L-glutamate + NH4(+). Its pathway is amino-acid biosynthesis; L-histidine biosynthesis; L-histidine from 5-phospho-alpha-D-ribose 1-diphosphate: step 5/9. Its function is as follows. IGPS catalyzes the conversion of PRFAR and glutamine to IGP, AICAR and glutamate. The HisH subunit catalyzes the hydrolysis of glutamine to glutamate and ammonia as part of the synthesis of IGP and AICAR. The resulting ammonia molecule is channeled to the active site of HisF. The sequence is that of Imidazole glycerol phosphate synthase subunit HisH from Herpetosiphon aurantiacus (strain ATCC 23779 / DSM 785 / 114-95).